We begin with the raw amino-acid sequence, 568 residues long: Involucrin (568 aa).

Disordered stretches follow at residues 23-499 (CSPA…EKEL) and 517-568 (RKKH…HEVQ). The segment covering 25–36 (PAQTQQEQTKQP) has biased composition (low complexity). Over residues 49–77 (TQEKGFPKHEEKEANPVKDLPEQESEHHQ) the composition is skewed to basic and acidic residues. A compositionally biased stretch (low complexity) spans 78-88 (QPGPQKQQLQV). Residues 89 to 106 (KKPEQELQEQELHSEKQP) show a composition bias toward basic and acidic residues. 3 stretches are compositionally biased toward low complexity: residues 107–121 (QEPQ…QQQR), 133–154 (HQQP…QDVL), and 172–181 (PELPLGQQQK). Over residues 193 to 213 (KQQKLHLVERHQEPQEQELHH) the composition is skewed to basic and acidic residues. A compositionally biased stretch (low complexity) spans 217 to 232 (QKQQQPQEQELQLVQH). Basic and acidic residues-rich tracts occupy residues 266-333 (ESHE…HQET) and 345-456 (KPHE…HLGK). Residues 457–467 (QQEQQIEYEGY) are compositionally biased toward low complexity. Serine 472 bears the Phosphoserine mark. Basic and acidic residues-rich tracts occupy residues 478–499 (KQEK…EKEL), 517–532 (RKKH…EKQI), and 551–568 (VKED…HEVQ).

This sequence belongs to the involucrin family. As to quaternary structure, directly or indirectly cross-linked to cornifelin (CNFN). Post-translationally, substrate of transglutaminase. Specific glutamines or lysines are cross-linked to keratins, desmoplakin and to inter involucrin molecules. In terms of tissue distribution, keratinocytes of epidermis and other stratified squamous epithelia.

The protein localises to the cytoplasm. Part of the insoluble cornified cell envelope (CE) of stratified squamous epithelia. This Rattus norvegicus (Rat) protein is Involucrin (Ivl).